The chain runs to 181 residues: Adenine phosphoribosyltransferase (181 aa).

Belongs to the purine/pyrimidine phosphoribosyltransferase family. As to quaternary structure, homodimer.

It is found in the cytoplasm. The catalysed reaction is AMP + diphosphate = 5-phospho-alpha-D-ribose 1-diphosphate + adenine. It participates in purine metabolism; AMP biosynthesis via salvage pathway; AMP from adenine: step 1/1. Catalyzes a salvage reaction resulting in the formation of AMP, that is energically less costly than de novo synthesis. In Acidobacterium capsulatum (strain ATCC 51196 / DSM 11244 / BCRC 80197 / JCM 7670 / NBRC 15755 / NCIMB 13165 / 161), this protein is Adenine phosphoribosyltransferase.